We begin with the raw amino-acid sequence, 343 residues long: N-acetyl-gamma-glutamyl-phosphate reductase (343 aa).

Residue Cys148 is part of the active site.

It belongs to the NAGSA dehydrogenase family. Type 1 subfamily.

The protein localises to the cytoplasm. It catalyses the reaction N-acetyl-L-glutamate 5-semialdehyde + phosphate + NADP(+) = N-acetyl-L-glutamyl 5-phosphate + NADPH + H(+). It participates in amino-acid biosynthesis; L-arginine biosynthesis; N(2)-acetyl-L-ornithine from L-glutamate: step 3/4. Its function is as follows. Catalyzes the NADPH-dependent reduction of N-acetyl-5-glutamyl phosphate to yield N-acetyl-L-glutamate 5-semialdehyde. This is N-acetyl-gamma-glutamyl-phosphate reductase from Caldicellulosiruptor bescii (strain ATCC BAA-1888 / DSM 6725 / KCTC 15123 / Z-1320) (Anaerocellum thermophilum).